A 509-amino-acid polypeptide reads, in one-letter code: Lanosterol 14-alpha demethylase (509 aa).

A helical transmembrane segment spans residues 30–50 (GNLLSMLLIACAFTLSLVYLF). Cys-455 is a binding site for heme.

This sequence belongs to the cytochrome P450 family. The cofactor is heme. In terms of processing, ubiquitinated by MARCHF6, leading to proteasomal degradation.

It localises to the endoplasmic reticulum membrane. Its subcellular location is the microsome membrane. The enzyme catalyses a 14alpha-methyl steroid + 3 reduced [NADPH--hemoprotein reductase] + 3 O2 = a Delta(14) steroid + formate + 3 oxidized [NADPH--hemoprotein reductase] + 4 H2O + 4 H(+). It catalyses the reaction lanosterol + 3 reduced [NADPH--hemoprotein reductase] + 3 O2 = 4,4-dimethyl-5alpha-cholesta-8,14,24-trien-3beta-ol + formate + 3 oxidized [NADPH--hemoprotein reductase] + 4 H2O + 4 H(+). The catalysed reaction is 24,25-dihydrolanosterol + 3 reduced [NADPH--hemoprotein reductase] + 3 O2 = 4,4-dimethyl-8,14-cholestadien-3beta-ol + formate + 3 oxidized [NADPH--hemoprotein reductase] + 4 H2O + 4 H(+). It carries out the reaction a 14alpha-methyl steroid + reduced [NADPH--hemoprotein reductase] + O2 = a 14alpha-hydroxymethyl steroid + oxidized [NADPH--hemoprotein reductase] + H2O + H(+). The enzyme catalyses a 14alpha-hydroxymethyl steroid + reduced [NADPH--hemoprotein reductase] + O2 = a 14alpha-formyl steroid + oxidized [NADPH--hemoprotein reductase] + 2 H2O + H(+). It catalyses the reaction a 14alpha-formyl steroid + reduced [NADPH--hemoprotein reductase] + O2 = a Delta(14) steroid + formate + oxidized [NADPH--hemoprotein reductase] + H2O + 2 H(+). The catalysed reaction is lanosterol + reduced [NADPH--hemoprotein reductase] + O2 = 32-hydroxylanosterol + oxidized [NADPH--hemoprotein reductase] + H2O + H(+). It carries out the reaction 32-hydroxylanosterol + reduced [NADPH--hemoprotein reductase] + O2 = 32-oxolanosterol + oxidized [NADPH--hemoprotein reductase] + 2 H2O + H(+). The enzyme catalyses 32-oxolanosterol + reduced [NADPH--hemoprotein reductase] + O2 = 4,4-dimethyl-5alpha-cholesta-8,14,24-trien-3beta-ol + formate + oxidized [NADPH--hemoprotein reductase] + H2O + 2 H(+). It catalyses the reaction 24,25-dihydrolanosterol + reduced [NADPH--hemoprotein reductase] + O2 = 32-hydroxy-24,25-dihydrolanosterol + oxidized [NADPH--hemoprotein reductase] + H2O + H(+). The catalysed reaction is 32-hydroxy-24,25-dihydrolanosterol + reduced [NADPH--hemoprotein reductase] + O2 = 32-oxo-24,25-dihydrolanosterol + oxidized [NADPH--hemoprotein reductase] + 2 H2O + H(+). It carries out the reaction 32-oxo-24,25-dihydrolanosterol + reduced [NADPH--hemoprotein reductase] + O2 = 4,4-dimethyl-8,14-cholestadien-3beta-ol + formate + oxidized [NADPH--hemoprotein reductase] + H2O + 2 H(+). It participates in steroid biosynthesis; zymosterol biosynthesis; zymosterol from lanosterol: step 1/6. Inhibited by azalanstat. Inhibited by azole antifungal agents ketoconazole, itraconazole and fluconazole. Its function is as follows. Sterol 14alpha-demethylase that plays a critical role in the cholesterol biosynthesis pathway, being cholesterol the major sterol component in mammalian membranes as well as a precursor for bile acid and steroid hormone synthesis. Cytochrome P450 monooxygenase that catalyzes the three-step oxidative removal of the 14alpha-methyl group (C-32) of sterols such as lanosterol (lanosta-8,24-dien-3beta-ol) and 24,25-dihydrolanosterol (DHL) in the form of formate, and converts the sterols to 4,4-dimethyl-5alpha-cholesta-8,14,24-trien-3beta-ol and 4,4-dimethyl-8,14-cholestadien-3beta-ol, respectively, which are intermediates of cholesterol biosynthesis. Can also demethylate substrates not intrinsic to mammals, such as eburicol (24-methylene-24,25-dihydrolanosterol), but at a lower rate than DHL. The sequence is that of Lanosterol 14-alpha demethylase from Macaca fascicularis (Crab-eating macaque).